Here is a 321-residue protein sequence, read N- to C-terminus: Ornithine carbamoyltransferase (321 aa).

Residues 53 to 56 (STRT), glutamine 80, arginine 104, and 131 to 134 (HPCQ) each bind carbamoyl phosphate. Residues asparagine 166, aspartate 230, and 234 to 235 (SM) contribute to the L-ornithine site. Carbamoyl phosphate is bound by residues 270–271 (CL) and arginine 298.

It belongs to the aspartate/ornithine carbamoyltransferase superfamily. OTCase family.

It is found in the cytoplasm. The enzyme catalyses carbamoyl phosphate + L-ornithine = L-citrulline + phosphate + H(+). It participates in amino-acid biosynthesis; L-arginine biosynthesis; L-arginine from L-ornithine and carbamoyl phosphate: step 1/3. In terms of biological role, reversibly catalyzes the transfer of the carbamoyl group from carbamoyl phosphate (CP) to the N(epsilon) atom of ornithine (ORN) to produce L-citrulline. The chain is Ornithine carbamoyltransferase from Bifidobacterium longum (strain NCC 2705).